Consider the following 117-residue polypeptide: MDKKAARIRRATRARRKLQELGATRLVVHRTPRHIYAQVIAPNGSETLVAASTTEKAIIEQLKNTGNKEAAAVVGKIVAERALEKGIKSVSFDRSGFQYHGRVQALADAAREAGLQF.

It belongs to the universal ribosomal protein uL18 family. As to quaternary structure, part of the 50S ribosomal subunit; part of the 5S rRNA/L5/L18/L25 subcomplex. Contacts the 5S and 23S rRNAs.

In terms of biological role, this is one of the proteins that bind and probably mediate the attachment of the 5S RNA into the large ribosomal subunit, where it forms part of the central protuberance. The protein is Large ribosomal subunit protein uL18 of Proteus mirabilis (strain HI4320).